A 119-amino-acid polypeptide reads, in one-letter code: Ribosome-binding factor A (119 aa).

It belongs to the RbfA family. As to quaternary structure, monomer. Binds 30S ribosomal subunits, but not 50S ribosomal subunits or 70S ribosomes.

It is found in the cytoplasm. One of several proteins that assist in the late maturation steps of the functional core of the 30S ribosomal subunit. Associates with free 30S ribosomal subunits (but not with 30S subunits that are part of 70S ribosomes or polysomes). Required for efficient processing of 16S rRNA. May interact with the 5'-terminal helix region of 16S rRNA. This chain is Ribosome-binding factor A, found in Chlorobium phaeovibrioides (strain DSM 265 / 1930) (Prosthecochloris vibrioformis (strain DSM 265)).